Here is a 386-residue protein sequence, read N- to C-terminus: Succinate--CoA ligase [ADP-forming] subunit beta (386 aa).

The ATP-grasp domain maps to 9–244 (KDLLTSYAIP…PSQENVRDVL (236 aa)). ATP is bound by residues Lys-46, 53 to 55 (GRG), Val-102, and Glu-107. The Mg(2+) site is built by Asn-199 and Asp-213. Substrate is bound by residues Asn-264 and 321–323 (GIM).

It belongs to the succinate/malate CoA ligase beta subunit family. As to quaternary structure, heterotetramer of two alpha and two beta subunits. Mg(2+) serves as cofactor.

It carries out the reaction succinate + ATP + CoA = succinyl-CoA + ADP + phosphate. The catalysed reaction is GTP + succinate + CoA = succinyl-CoA + GDP + phosphate. It functions in the pathway carbohydrate metabolism; tricarboxylic acid cycle; succinate from succinyl-CoA (ligase route): step 1/1. In terms of biological role, succinyl-CoA synthetase functions in the citric acid cycle (TCA), coupling the hydrolysis of succinyl-CoA to the synthesis of either ATP or GTP and thus represents the only step of substrate-level phosphorylation in the TCA. The beta subunit provides nucleotide specificity of the enzyme and binds the substrate succinate, while the binding sites for coenzyme A and phosphate are found in the alpha subunit. This Chlamydia abortus (strain DSM 27085 / S26/3) (Chlamydophila abortus) protein is Succinate--CoA ligase [ADP-forming] subunit beta.